The sequence spans 84 residues: uncharacterized protein (84 aa).

The protein to M.jannaschii MJ1121.

This is an uncharacterized protein from Archaeoglobus fulgidus (strain ATCC 49558 / DSM 4304 / JCM 9628 / NBRC 100126 / VC-16).